Consider the following 172-residue polypeptide: RNA silencing suppressor p19 (172 aa).

Positions 1–20 (MERAIQGNDAREQANSERWD) are enriched in basic and acidic residues. A disordered region spans residues 1-38 (MERAIQGNDAREQANSERWDGGSGSSTSPFQLPDESPS).

Belongs to the tombusvirus protein p19 family. As to quaternary structure, homodimer.

Viral suppressor of RNA silencing which binds specifically to silencing RNAs (siRNAs). Acts as a molecular caliper to specifically select siRNAs based on the length of the duplex region of the RNA. The chain is RNA silencing suppressor p19 from Tomato bushy stunt virus (strain type) (TBSV).